A 403-amino-acid chain; its full sequence is Tryptophan 2,3-dioxygenase (403 aa).

Residue 69–73 (FIVIH) participates in substrate binding. Positions 133-135 (PLD) match the PLD motif; required for enzymatic activity motif. Arg-140 provides a ligand contact to substrate. His-327 is a binding site for heme. Thr-341 is a substrate binding site.

This sequence belongs to the tryptophan 2,3-dioxygenase family. Homotetramer. Dimer of dimers. Heme serves as cofactor. As to expression, expressed in body wall muscle cells, hypodermis, PLM neurons and touch-receptor neurons.

It carries out the reaction L-tryptophan + O2 = N-formyl-L-kynurenine. It participates in amino-acid degradation; L-tryptophan degradation via kynurenine pathway; L-kynurenine from L-tryptophan: step 1/2. Functionally, heme-dependent dioxygenase that catalyzes the oxidative cleavage of the L-tryptophan (L-Trp) pyrrole ring and converts L-tryptophan to N-formyl-L-kynurenine. Catalyzes the oxidative cleavage of the indole moiety. Involved in regulation of protein homeostasis, longevity and reproducive life span. Specifically regulates proteotoxicity due to age-related aggregation of proteins like alpha-synuclein, via its effects on tryptophan metabolism. The protein is Tryptophan 2,3-dioxygenase of Caenorhabditis elegans.